Reading from the N-terminus, the 304-residue chain is Acetaldehyde dehydrogenase 2 (304 aa).

Cys-131 functions as the Acyl-thioester intermediate in the catalytic mechanism. NAD(+) is bound by residues 162-170 (SAGPGTRKN) and Asn-273.

The protein belongs to the acetaldehyde dehydrogenase family.

It catalyses the reaction acetaldehyde + NAD(+) + CoA = acetyl-CoA + NADH + H(+). The polypeptide is Acetaldehyde dehydrogenase 2 (Dechloromonas aromatica (strain RCB)).